The primary structure comprises 120 residues: Aspartate 1-decarboxylase (120 aa).

Serine 25 functions as the Schiff-base intermediate with substrate; via pyruvic acid in the catalytic mechanism. Pyruvic acid (Ser) is present on serine 25. Substrate is bound at residue threonine 57. Residue tyrosine 58 is the Proton donor of the active site. Residue 73-75 coordinates substrate; sequence GAA.

Belongs to the PanD family. In terms of assembly, heterooctamer of four alpha and four beta subunits. Pyruvate serves as cofactor. Post-translationally, is synthesized initially as an inactive proenzyme, which is activated by self-cleavage at a specific serine bond to produce a beta-subunit with a hydroxyl group at its C-terminus and an alpha-subunit with a pyruvoyl group at its N-terminus.

It is found in the cytoplasm. The enzyme catalyses L-aspartate + H(+) = beta-alanine + CO2. It participates in cofactor biosynthesis; (R)-pantothenate biosynthesis; beta-alanine from L-aspartate: step 1/1. Catalyzes the pyruvoyl-dependent decarboxylation of aspartate to produce beta-alanine. This Cupriavidus taiwanensis (strain DSM 17343 / BCRC 17206 / CCUG 44338 / CIP 107171 / LMG 19424 / R1) (Ralstonia taiwanensis (strain LMG 19424)) protein is Aspartate 1-decarboxylase.